We begin with the raw amino-acid sequence, 173 residues long: Translation initiation factor IF-3 (173 aa).

The protein belongs to the IF-3 family. Monomer.

The protein resides in the cytoplasm. Its function is as follows. IF-3 binds to the 30S ribosomal subunit and shifts the equilibrium between 70S ribosomes and their 50S and 30S subunits in favor of the free subunits, thus enhancing the availability of 30S subunits on which protein synthesis initiation begins. The sequence is that of Translation initiation factor IF-3 from Methylobacterium radiotolerans (strain ATCC 27329 / DSM 1819 / JCM 2831 / NBRC 15690 / NCIMB 10815 / 0-1).